Consider the following 245-residue polypeptide: Uridylate kinase (245 aa).

20–23 (KVSG) lines the ATP pocket. G62 is a UMP binding site. ATP contacts are provided by G63 and R67. UMP-binding positions include D81 and 142-149 (IGSPFFTT). T169, Q170, Y175, and D178 together coordinate ATP.

The protein belongs to the UMP kinase family. In terms of assembly, homohexamer.

It localises to the cytoplasm. It catalyses the reaction UMP + ATP = UDP + ADP. Its pathway is pyrimidine metabolism; CTP biosynthesis via de novo pathway; UDP from UMP (UMPK route): step 1/1. Its activity is regulated as follows. Inhibited by UTP. Catalyzes the reversible phosphorylation of UMP to UDP. The polypeptide is Uridylate kinase (Anaplasma marginale (strain St. Maries)).